Consider the following 374-residue polypeptide: Chaperone protein DnaJ (374 aa).

The J domain occupies 6 to 71; the sequence is DYYAVLEVTR…QKRAAYDRFG (66 aa). The segment at 130-209 adopts a CR-type zinc-finger fold; that stretch reads GVKKPITVPT…CHGAGTVERE (80 aa). Positions 143, 146, 161, 164, 183, 186, 197, and 200 each coordinate Zn(2+). 4 CXXCXGXG motif repeats span residues 143–150, 161–168, 183–190, and 197–204; these read CESCEGTG, CPTCHGAG, and CAACHGAG.

This sequence belongs to the DnaJ family. In terms of assembly, homodimer. It depends on Zn(2+) as a cofactor.

It localises to the cytoplasm. Its function is as follows. Participates actively in the response to hyperosmotic and heat shock by preventing the aggregation of stress-denatured proteins and by disaggregating proteins, also in an autonomous, DnaK-independent fashion. Unfolded proteins bind initially to DnaJ; upon interaction with the DnaJ-bound protein, DnaK hydrolyzes its bound ATP, resulting in the formation of a stable complex. GrpE releases ADP from DnaK; ATP binding to DnaK triggers the release of the substrate protein, thus completing the reaction cycle. Several rounds of ATP-dependent interactions between DnaJ, DnaK and GrpE are required for fully efficient folding. Also involved, together with DnaK and GrpE, in the DNA replication of plasmids through activation of initiation proteins. The protein is Chaperone protein DnaJ of Gluconacetobacter diazotrophicus (strain ATCC 49037 / DSM 5601 / CCUG 37298 / CIP 103539 / LMG 7603 / PAl5).